A 366-amino-acid chain; its full sequence is MLKTISGTLALSLIIAASVHQAQAATTYNAVVSKSSSDGKTFKTIADAIASAPAGSTPFVILIKNGVYNERLTITRNNLLLKGESRNGAVIAAATAAGTLKSDGSKWGTAGSSTITISAKDFSAQSLTIRNDFDFPANQAKSDSDSSKIKDTQAVALYVTKSGDRAYFKDVSLVGYQDTLYVSGGRSFFSDCRISGTVDFIFGDGTALFNNCDLVSRYRADVKSGNVSGYLTAPSTNINQKYGLVITNSRVIRESDSVPAKSYGLGRPWHPTTTFSDGRYADPNAIGQTVFLNTSMDNHIYGWDKMSGKDKNGNTIWFNPEDSRFFEYKSYGAGAAVSKDRRQLTDAQAAEYTQSKVLGDWTPTLP.

The first 24 residues, 1-24 (MLKTISGTLALSLIIAASVHQAQA), serve as a signal peptide directing secretion. Substrate-binding residues include Thr109 and Gln153. The Proton donor role is filled by Asp178. Cysteines 192 and 212 form a disulfide. Catalysis depends on Asp199, which acts as the Nucleophile. Residues Arg219, Asn226, Tyr230, Arg267, Trp269, and Thr272 each coordinate substrate.

Belongs to the pectinesterase family. In terms of assembly, monomer.

The protein localises to the secreted. It catalyses the reaction [(1-&gt;4)-alpha-D-galacturonosyl methyl ester](n) + n H2O = [(1-&gt;4)-alpha-D-galacturonosyl](n) + n methanol + n H(+). It functions in the pathway glycan metabolism; pectin degradation; 2-dehydro-3-deoxy-D-gluconate from pectin: step 1/5. Involved in maceration and soft-rotting of plant tissue. The polypeptide is Pectinesterase A (pemA) (Dickeya chrysanthemi (Pectobacterium chrysanthemi)).